The primary structure comprises 351 residues: MIRIIGIGPARDDITIRALRALEDSDVVIGYARYIRQIEDLLDGKEVIRSGMGDEIERVELAIEKHREGLDVALVSSGDPGVYGMANVFFQIFDKYSGIEFEVIPGVTAVNYAASKLGAPLHDFAVISLSDILTPLSEIMAKIRAAAESGMIIALYNPLGKRRKRPFREAVEILRSLLPPQTPVGIVRTVDGAPDVRIVDLESLDESLVDMSTIVLVGNVTTYTRDGQMITPRGYAVETPLHELAREFYEENPLGKASGPDENCEFYPCHFEGQNCAFCYCPFYPCAEGSTGGRWIRDRGVWSCQDCTWIHTDSAVECVKRSLGDIISGPDDLMDKKRELLKLRRECLMRG.

Belongs to the precorrin methyltransferase family.

It carries out the reaction Co(II)-factor III + S-adenosyl-L-methionine + H(+) = Co(II)-factor IV + S-adenosyl-L-homocysteine. The protein operates within cofactor biosynthesis; adenosylcobalamin biosynthesis; cob(II)yrinate a,c-diamide from sirohydrochlorin (anaerobic route): step 3/10. Methyltransferase that likely catalyzes the ring contraction and methylation of C-17 in cobalt-factor III to form cobalt-factor IV. May also convert cobalt-precorrin-3 to cobalt-precorrin-4. This Methanothermobacter thermautotrophicus (strain ATCC 29096 / DSM 1053 / JCM 10044 / NBRC 100330 / Delta H) (Methanobacterium thermoautotrophicum) protein is Probable cobalt-factor III C(17)-methyltransferase (cbiH).